A 353-amino-acid chain; its full sequence is MFKIAPLNNQFDHLIHNKINNKTKPLGALGQLELIALQLVKILSQTIKSDVEFTAFKAEICNPTLVVFAGDHGIAAQGVSIAPSEVTAQMVANFVAGGAAINIFCQQLGWQLEVVDCGILEKSPASKVHDCRLGNITAPLNLHMAMSTAQVKQGFSNAKSLVLQLKQQGCNTLAMGEMGIGNTTSAAAIMAAILNLPVTQCVGRGTGVSDELIARKINVVEQALQLHKAHLADPIALLAAVGGFEIVHITGAMLAAAEQGMAVIVDGFICSAAAMVAIKINPIVKEYLIFAHCSNEQGHQQMLSKLEVKPLLQLDLRLGEGTGAALSLPLLQAALGFYNHMASFADAGVEQVV.

Glu320 (proton acceptor) is an active-site residue.

This sequence belongs to the CobT family.

It catalyses the reaction 5,6-dimethylbenzimidazole + nicotinate beta-D-ribonucleotide = alpha-ribazole 5'-phosphate + nicotinate + H(+). It functions in the pathway nucleoside biosynthesis; alpha-ribazole biosynthesis; alpha-ribazole from 5,6-dimethylbenzimidazole: step 1/2. In terms of biological role, catalyzes the synthesis of alpha-ribazole-5'-phosphate from nicotinate mononucleotide (NAMN) and 5,6-dimethylbenzimidazole (DMB). This is Nicotinate-nucleotide--dimethylbenzimidazole phosphoribosyltransferase from Pseudoalteromonas translucida (strain TAC 125).